Reading from the N-terminus, the 344-residue chain is tRNA N6-adenosine threonylcarbamoyltransferase (344 aa).

Histidine 111 and histidine 115 together coordinate Fe cation. Residues 134-138 (LVSGG), aspartate 167, glycine 180, and asparagine 273 each bind substrate. Aspartate 301 is a Fe cation binding site.

It belongs to the KAE1 / TsaD family. It depends on Fe(2+) as a cofactor.

The protein resides in the cytoplasm. The enzyme catalyses L-threonylcarbamoyladenylate + adenosine(37) in tRNA = N(6)-L-threonylcarbamoyladenosine(37) in tRNA + AMP + H(+). Functionally, required for the formation of a threonylcarbamoyl group on adenosine at position 37 (t(6)A37) in tRNAs that read codons beginning with adenine. Is involved in the transfer of the threonylcarbamoyl moiety of threonylcarbamoyl-AMP (TC-AMP) to the N6 group of A37, together with TsaE and TsaB. TsaD likely plays a direct catalytic role in this reaction. This chain is tRNA N6-adenosine threonylcarbamoyltransferase, found in Cupriavidus pinatubonensis (strain JMP 134 / LMG 1197) (Cupriavidus necator (strain JMP 134)).